The following is a 158-amino-acid chain: NADPH-dependent 7-cyano-7-deazaguanine reductase (158 aa).

Residue C56 is the Thioimide intermediate of the active site. The active-site Proton donor is D63. Residues 78–80 (LES) and 97–98 (HE) contribute to the substrate site.

Belongs to the GTP cyclohydrolase I family. QueF type 1 subfamily.

It localises to the cytoplasm. It catalyses the reaction 7-aminomethyl-7-carbaguanine + 2 NADP(+) = 7-cyano-7-deazaguanine + 2 NADPH + 3 H(+). It functions in the pathway tRNA modification; tRNA-queuosine biosynthesis. Functionally, catalyzes the NADPH-dependent reduction of 7-cyano-7-deazaguanine (preQ0) to 7-aminomethyl-7-deazaguanine (preQ1). In Nitrobacter hamburgensis (strain DSM 10229 / NCIMB 13809 / X14), this protein is NADPH-dependent 7-cyano-7-deazaguanine reductase.